The chain runs to 337 residues: Protoheme IX farnesyltransferase (337 aa).

Polar residues predominate over residues 1–17 (MPFSISKDTVSNQTTHV). The segment at 1–41 (MPFSISKDTVSNQTTHVATAPASQRPDPVETKVEQEQGRPR) is disordered. A compositionally biased stretch (basic and acidic residues) spans 27–41 (DPVETKVEQEQGRPR). The next 8 helical transmembrane spans lie at 59-79 (IIEL…HGVP), 81-101 (LGLV…ANVF), 130-150 (SALI…GFGA), 153-173 (LSAA…SMLL), 196-216 (WTAV…IVFW), 250-270 (VAIQ…VLWP), 271-291 (VAHM…VFIV), and 311-331 (PMGL…AIAV).

It belongs to the UbiA prenyltransferase family. Protoheme IX farnesyltransferase subfamily.

It is found in the cell membrane. It catalyses the reaction heme b + (2E,6E)-farnesyl diphosphate + H2O = Fe(II)-heme o + diphosphate. It participates in porphyrin-containing compound metabolism; heme O biosynthesis; heme O from protoheme: step 1/1. In terms of biological role, converts heme B (protoheme IX) to heme O by substitution of the vinyl group on carbon 2 of heme B porphyrin ring with a hydroxyethyl farnesyl side group. The polypeptide is Protoheme IX farnesyltransferase (Cutibacterium acnes (strain DSM 16379 / KPA171202) (Propionibacterium acnes)).